The chain runs to 2326 residues: Telomere-associated protein RIF1 (2326 aa).

Disordered regions lie at residues 381–410, 1105–1965, and 1993–2050; these read QGTP…SPAT, YTQS…CITP, and VENK…DDSL. Over residues 382–396 the composition is skewed to polar residues; that stretch reads GTPSRVPSNPNSANP. Basic and acidic residues-rich tracts occupy residues 1112-1126 and 1150-1182; these read SLEK…EDFK and CKVD…RGDR. The segment covering 1216-1225 has biased composition (low complexity); the sequence is SAISCSSTSS. 2 stretches are compositionally biased toward polar residues: residues 1233–1242 and 1252–1270; these read QPASRRQSFI and SRPF…SQSA. The span at 1290 to 1299 shows a compositional bias: basic and acidic residues; the sequence is KSGEESRKSS. Composition is skewed to polar residues over residues 1318–1332 and 1341–1353; these read MEQQ…VTNS and SFVS…SPES. A compositionally biased stretch (basic and acidic residues) spans 1376-1402; it reads PDIKKAEAVMAEIEKVRAFEMDSKENT. Over residues 1403 to 1412 the composition is skewed to polar residues; that stretch reads PPKTAVSSEQ. 3 stretches are compositionally biased toward basic and acidic residues: residues 1448–1480, 1489–1511, and 1519–1539; these read QDKE…DASQ, ASEH…DLGS, and GADE…KSDS. Residues 1564 to 1573 are compositionally biased toward polar residues; sequence SSQGLLSSIE. A compositionally biased stretch (basic residues) spans 1586–1595; sequence SLKKKSGKTK. The segment covering 1596-1609 has biased composition (basic and acidic residues); the sequence is NKSDSLEGKRKDVQ. Composition is skewed to polar residues over residues 1610–1640 and 1671–1683; these read PESQ…SEVS and RTSP…SVEQ. The segment covering 1697 to 1712 has biased composition (basic and acidic residues); the sequence is RVSDEVLKGDENKCIE. Residues 1713–1745 show a composition bias toward polar residues; that stretch reads KQSSVEQHSSVQPENVQGANTSGSDLSSLQMQD. A compositionally biased stretch (basic and acidic residues) spans 1776 to 1785; sequence SKSEDPRELI. Residues 1795 to 1813 are compositionally biased toward polar residues; it reads AVSTAEVSGSSNLEESLSI. 3 stretches are compositionally biased toward basic and acidic residues: residues 1869–1884, 1908–1925, and 1932–1954; these read VEIK…DRAE, SEEK…HGEM, and DGSK…KEEA. The span at 2009–2036 shows a compositional bias: polar residues; it reads SFTSVNGSPSGVQARCTWSPSASPSTSI.

It belongs to the RIF1 family. As to quaternary structure, interacts with TP53BP1 (when phosphorylated by ATM).

The protein resides in the nucleus. It localises to the chromosome. It is found in the telomere. The protein localises to the cytoplasm. Its subcellular location is the cytoskeleton. The protein resides in the spindle. Its function is as follows. Key regulator of TP53BP1 that plays a key role in the repair of double-strand DNA breaks (DSBs) in response to DNA damage: acts by promoting non-homologous end joining (NHEJ)-mediated repair of DSBs. In response to DNA damage, interacts with ATM-phosphorylated TP53BP1, allowing recruitment to DNA DSBs. Once recruited to DSBs, RIF1 and TP53BP1 act by promoting NHEJ-mediated repair of DSBs. In the same time, RIF1 and TP53BP1 specifically counteract DSBs resection via homologous recombination (HR) during G1 phase. The sequence is that of Telomere-associated protein RIF1 from Gallus gallus (Chicken).